The sequence spans 155 residues: Small ribosomal subunit protein uS7 (155 aa).

Belongs to the universal ribosomal protein uS7 family. Part of the 30S ribosomal subunit. Contacts proteins S9 and S11.

Functionally, one of the primary rRNA binding proteins, it binds directly to 16S rRNA where it nucleates assembly of the head domain of the 30S subunit. Is located at the subunit interface close to the decoding center, probably blocks exit of the E-site tRNA. In Xylella fastidiosa (strain M12), this protein is Small ribosomal subunit protein uS7.